A 252-amino-acid chain; its full sequence is Flap endonuclease Xni (252 aa).

Mg(2+) is bound at residue D105. The region spanning 162-251 (EQYQFLDFIA…EINLKQFRVK (90 aa)) is the 5'-3' exonuclease domain. K(+) is bound by residues L172, A173, P181, I183, and I186. The tract at residues 185-190 (GIGPKS) is interaction with DNA.

Belongs to the Xni family. Requires Mg(2+) as cofactor. The cofactor is K(+).

Its function is as follows. Has flap endonuclease activity. During DNA replication, flap endonucleases cleave the 5'-overhanging flap structure that is generated by displacement synthesis when DNA polymerase encounters the 5'-end of a downstream Okazaki fragment. This is Flap endonuclease Xni from Shewanella denitrificans (strain OS217 / ATCC BAA-1090 / DSM 15013).